Reading from the N-terminus, the 693-residue chain is UvrABC system protein B (693 aa).

A Helicase ATP-binding domain is found at 35 to 188 (ERINNGEKDV…DQLLRQFVGI (154 aa)). Position 48–55 (48–55 (GATGTGKS)) interacts with ATP. The Beta-hairpin motif lies at 101-124 (YYDYYQPEAYVPQTDTFIEKDSSV). Residues 438-600 (QIDDLLGEIR…VDPTPLRKRI (163 aa)) form the Helicase C-terminal domain. The interval 612–634 (ADTKSLLESAGKGRSRGKAPVPV) is disordered. Residues 648–683 (VDLIEQLTAQMHSAAGELQFELAARLRDEVGDLKKE) form the UVR domain.

Belongs to the UvrB family. In terms of assembly, forms a heterotetramer with UvrA during the search for lesions. Interacts with UvrC in an incision complex.

It localises to the cytoplasm. In terms of biological role, the UvrABC repair system catalyzes the recognition and processing of DNA lesions. A damage recognition complex composed of 2 UvrA and 2 UvrB subunits scans DNA for abnormalities. Upon binding of the UvrA(2)B(2) complex to a putative damaged site, the DNA wraps around one UvrB monomer. DNA wrap is dependent on ATP binding by UvrB and probably causes local melting of the DNA helix, facilitating insertion of UvrB beta-hairpin between the DNA strands. Then UvrB probes one DNA strand for the presence of a lesion. If a lesion is found the UvrA subunits dissociate and the UvrB-DNA preincision complex is formed. This complex is subsequently bound by UvrC and the second UvrB is released. If no lesion is found, the DNA wraps around the other UvrB subunit that will check the other stand for damage. The sequence is that of UvrABC system protein B from Renibacterium salmoninarum (strain ATCC 33209 / DSM 20767 / JCM 11484 / NBRC 15589 / NCIMB 2235).